Here is a 452-residue protein sequence, read N- to C-terminus: Transcription factor PERIANTHIA (452 aa).

One can recognise a bZIP domain in the interval D164–L227. The tract at residues R166 to K186 is basic motif. The tract at residues L192–L206 is leucine-zipper. Positions V233–R449 constitute a DOG1 domain.

This sequence belongs to the bZIP family. Interacts with GRXC7/ROXY1. Interacts with BOP1 and BOP2.

The protein resides in the nucleus. Transcriptional activator involved in the determination of floral organ number. Acts to determine floral organ patterning by establishing floral organ primordia in specific numbers and positions. Plays a role in regulating stem cell fate by directly controlling AG expression. Binds to the 5'-AAGAAT-3' cis-acting element found in AG promoter. Might represent a target for a post-translational modification by GRXC7/ROXY1. This Arabidopsis thaliana (Mouse-ear cress) protein is Transcription factor PERIANTHIA (PAN).